The primary structure comprises 1733 residues: Gag-Pol polyprotein (1733 aa).

G2 carries the N-myristoyl glycine; by host lipid modification. Residues 109–112 (PSAP) carry the PTAP/PSAP motif motif. Pro residues predominate over residues 112–121 (PSLLPEPPLS). Disordered regions lie at residues 112-196 (PSLL…ASRL) and 202-221 (LPVADSTTSQAFPLRSGGNG). The LYPX(n)L motif motif lies at 128-132 (LYPAL). The span at 159-170 (DPPPYRDPGPPP) shows a compositional bias: pro residues. Residues 160–163 (PPPY) carry the PPXY motif motif. Position 190 is a phosphoserine; by host (S190). The interval 343 to 391 (GRSPTNLAKVKGITQGPNESPSAFLERLKEAYRRYTPYDPEDPGQETNV) is interaction with host PIAS4. The interaction with host UBE2I stretch occupies residues 428–433 (IFNKRE). 2 stretches are compositionally biased toward basic and acidic residues: residues 432–464 (RETPEEREERIKRETEEKEERRRAEDEQKEKER) and 484–496 (KQDRQGGERRRPQ). Disordered regions lie at residues 432–496 (RETP…RRPQ) and 511–550 (WAKDCPKKPRGPRGPRPQTSLLALDDQGGRGQEPPPEPRI). The stretch at 436-476 (EEREERIKRETEEKEERRRAEDEQKEKERDRRRHREMSKLL) forms a coiled coil. A CCHC-type zinc finger spans residues 500-517 (DQCAYCKEKGHWAKDCPK). Positions 559-629 (VTFLVDTGAQ…CPYPLLGRDL (71 aa)) constitute a Peptidase A2 domain. D564 (protease; shared with dimeric partner) is an active-site residue. Residues 739 to 930 (LDQGILVPCQ…KQVKYLGYLL (192 aa)) enclose the Reverse transcriptase domain. Mg(2+)-binding residues include D807, D881, D882, D1181, E1219, D1240, and D1310. In terms of domain architecture, RNase H type-1 spans 1172-1318 (PDADHTWYTD…ADQAAREVAT (147 aa)). An HHCC-type zinc finger spans residues 1385-1425 (HQLTHLSFSKTKALLERSPSPYYMLNRDRTLKNITETCKAC). The region spanning 1442–1600 (RGHRPGTHWE…TPYEILYGAP (159 aa)) is the Integrase catalytic domain. Mg(2+) is bound by residues D1453 and D1512.

As to quaternary structure, homohexamer; further associates as homomultimer. The virus core is composed of a lattice formed from hexagonal rings, each containing six capsid monomers. Interacts with mouse UBE2I and mouse PIAS4. Interacts (via PPXY motif) with host NEDD4. Interacts (via PSAP motif) with host TSG101. Interacts (via LYPX(n)L motif) with host PDCD6IP. In terms of assembly, the reverse transcriptase is a monomer (Potential). Interacts (via RNase domains) with host release factor ETF1; this interaction is essential for translational readthrough of amber codon between viral gag and pol genes, as well as for viral replication. As to quaternary structure, homodimer. The cofactor is Mg(2+). In terms of processing, ubiquitinated by ITCH. Gag can recruit the ubiquitin ligase Itch in an L domain-independent manner to facilitate virus release via a mechanism that involves Gag ubiquitination. Post-translationally, specific enzymatic cleavages by the viral protease yield mature proteins. The protease is released by autocatalytic cleavage. The polyprotein is cleaved during and after budding, this process is termed maturation. Sumoylated; which is required for virus replication. In terms of processing, phosphorylated on serine residues.

It localises to the virion. Its subcellular location is the host cell membrane. The protein localises to the host late endosome membrane. It is found in the host endosome. The protein resides in the host multivesicular body. It localises to the host cytoplasm. The enzyme catalyses DNA(n) + a 2'-deoxyribonucleoside 5'-triphosphate = DNA(n+1) + diphosphate. The catalysed reaction is Endonucleolytic cleavage to 5'-phosphomonoester.. With respect to regulation, most efficiently inhibited by Amprenavir, which is able to block Gag-Pol processing in infected cells. Its function is as follows. Plays a role in budding and is processed by the viral protease during virion maturation outside the cell. During budding, it recruits, in a PPXY-dependent or independent manner, Nedd4-like ubiquitin ligases that conjugate ubiquitin molecules to Gag-Pol, or to Gag-Pol binding host factors. Interaction with HECT ubiquitin ligases probably links the viral protein to the host ESCRT pathway and facilitates release. Targets Gag and gag-pol polyproteins to the plasma membrane via a multipartite membrane binding signal, that includes its myristoylated N-terminus. Also mediates nuclear localization of the pre-integration complex. In terms of biological role, constituent of the pre-integration complex (PIC) which tethers the latter to mitotic chromosomes. This allows the integration of the viral genome into the host DNA. Functionally, forms the spherical core of the virion that encapsulates the genomic RNA-nucleocapsid complex. Its function is as follows. Involved in the packaging and encapsidation of two copies of the genome. Binds with high affinity to conserved UCUG elements within the packaging signal, located near the 5'-end of the genome. This binding is dependent on genome dimerization. Acts as a nucleic acid chaperone which is involved in rearrangement of nucleic acid secondary structures during gRNA retrotranscription. The aspartyl protease mediates proteolytic cleavages of Gag and Gag-Pol polyproteins during or shortly after the release of the virion from the plasma membrane. Cleavages take place as an ordered, step-wise cascade to yield mature proteins. This process is called maturation. Displays maximal activity during the budding process just prior to particle release from the cell (Potential). Cleaves the translation initiation factor eIF4G leading to the inhibition of host cap-dependent translation. In terms of biological role, RT is a multifunctional enzyme that converts the viral dimeric RNA genome into dsDNA in the cytoplasm, shortly after virus entry into the cell. This enzyme displays a DNA polymerase activity that can copy either DNA or RNA templates, and a ribonuclease H (RNase H) activity that cleaves the RNA strand of RNA-DNA heteroduplexes in a partially processive 3' to 5' endonucleasic mode. Conversion of viral genomic RNA into dsDNA requires many steps. A tRNA binds to the primer-binding site (PBS) situated at the 5' end of the viral RNA. RT uses the 3' end of the tRNA primer to perform a short round of RNA-dependent minus-strand DNA synthesis. The reading proceeds through the U5 region and ends after the repeated (R) region which is present at both ends of viral RNA. The portion of the RNA-DNA heteroduplex is digested by the RNase H, resulting in a ssDNA product attached to the tRNA primer. This ssDNA/tRNA hybridizes with the identical R region situated at the 3' end of viral RNA. This template exchange, known as minus-strand DNA strong stop transfer, can be either intra- or intermolecular. RT uses the 3' end of this newly synthesized short ssDNA to perform the RNA-dependent minus-strand DNA synthesis of the whole template. RNase H digests the RNA template except for a polypurine tract (PPT) situated at the 5' end of the genome. It is not clear if both polymerase and RNase H activities are simultaneous. RNase H probably can proceed both in a polymerase-dependent (RNA cut into small fragments by the same RT performing DNA synthesis) and a polymerase-independent mode (cleavage of remaining RNA fragments by free RTs). Secondly, RT performs DNA-directed plus-strand DNA synthesis using the PPT that has not been removed by RNase H as primers. PPT and tRNA primers are then removed by RNase H. The 3' and 5' ssDNA PBS regions hybridize to form a circular dsDNA intermediate. Strand displacement synthesis by RT to the PBS and PPT ends produces a blunt ended, linear dsDNA copy of the viral genome that includes long terminal repeats (LTRs) at both ends. Functionally, catalyzes viral DNA integration into the host chromosome, by performing a series of DNA cutting and joining reactions. This enzyme activity takes place after virion entry into a cell and reverse transcription of the RNA genome in dsDNA. The first step in the integration process is 3' processing. This step requires a complex comprising the viral genome, matrix protein and integrase. This complex is called the pre-integration complex (PIC). The integrase protein removes 2 nucleotides from each 3' end of the viral DNA, leaving recessed CA OH's at the 3' ends. In the second step that requires cell division, the PIC enters cell nucleus. In the third step, termed strand transfer, the integrase protein joins the previously processed 3' ends to the 5' ends of strands of target cellular DNA at the site of integration. The last step is viral DNA integration into host chromosome. The sequence is that of Gag-Pol polyprotein (gag-pol) from Cas-Br-E murine leukemia virus.